We begin with the raw amino-acid sequence, 84 residues long: Mu-conotoxin-like Cal 12.2d (84 aa).

Residues 1–19 (MKLTCVLVVLLLVLPFGDL) form the signal peptide. Positions 20-42 (ITTSNTEDNKRGATPWQNSLKAR) are excised as a propeptide. Trp-72 carries the post-translational modification 6'-bromotryptophan. Pro-77 is modified (4-hydroxyproline). Position 81 is a 6'-bromotryptophan (Trp-81).

This sequence belongs to the conotoxin O1 superfamily. In terms of processing, contains 4 disulfide bonds. Expressed by the venom duct.

The protein resides in the secreted. Functionally, mu-conotoxins block voltage-gated sodium channels. This toxin reversibly blocks voltage-gated sodium channel in cephalopods, with no alteration in the voltage dependence of sodium conductance or on the kinetics of inactivation. This is Mu-conotoxin-like Cal 12.2d from Californiconus californicus (California cone).